The chain runs to 473 residues: Isocitrate dehydrogenase [NADP] (473 aa).

NADP(+) is bound at residue Thr104. Residues Ser113, Asn115, Arg119, Arg129, and Arg153 each contribute to the D-threo-isocitrate site. Asp362 lines the Mg(2+) pocket. NADP(+) contacts are provided by residues 394–400 (HGTAPKH), Asn407, Tyr446, and Arg450.

Belongs to the isocitrate and isopropylmalate dehydrogenases family. Homodimer. It depends on Mg(2+) as a cofactor. Mn(2+) serves as cofactor.

The enzyme catalyses D-threo-isocitrate + NADP(+) = 2-oxoglutarate + CO2 + NADPH. With respect to regulation, inhibited by either oxaloacetate or glyoxylate. Also inhibited by the adenine nucleotides AMP, ADP and ATP and by NADPH, which inhibits the activity by 28% when it is added to the assay mixture at 0.25 mM. Functionally, catalyzes the oxidative decarboxylation of isocitrate to 2-oxoglutarate and carbon dioxide with the concomitant reduction of NADP(+). The polypeptide is Isocitrate dehydrogenase [NADP] (Nostoc sp. (strain PCC 7120 / SAG 25.82 / UTEX 2576)).